A 306-amino-acid polypeptide reads, in one-letter code: uncharacterized protein (306 aa).

The Proton donor role is filled by tyrosine 51. 197–207 is an NADP(+) binding site; the sequence is GPVAKGLLTEK.

It belongs to the aldo/keto reductase family. Aldo/keto reductase 2 subfamily.

This is an uncharacterized protein from Bacillus subtilis (strain 168).